We begin with the raw amino-acid sequence, 176 residues long: Heme oxygenase HutZ (176 aa).

A heme-binding site is contributed by H170.

It belongs to the heme oxygenase HugZ/HutZ family. As to quaternary structure, homodimer. Interacts with HutX, leading to the transfer of the heme from HutX to apo-HutZ.

It catalyses the reaction heme b + 3 AH2 + 3 O2 + 2 H(+) = biliverdin IXbeta + CO + Fe(2+) + 3 A + 3 H2O. The catalysed reaction is heme b + 3 AH2 + 3 O2 + 3 H(+) = biliverdin IXdelta + CO + Fe(2+) + 3 A + 3 H2O. With respect to regulation, activity is pH-dependent. A proximal hydrogen bond between Asp-132 and the heme axial ligant His-170 is essential for heme degradation activity. Heme-degradation reaction is inhibited by iron chelators. Functionally, involved in heme degradation. Catalyzes the degradation of heme to biliverdin, with the release of iron. Forms biliverdin beta and delta. Binds heme with high efficiency. This is Heme oxygenase HutZ from Vibrio cholerae serotype O1 (strain ATCC 39315 / El Tor Inaba N16961).